The following is a 191-amino-acid chain: Molybdenum cofactor guanylyltransferase (191 aa).

Residues 13-15 (LAG), Lys-26, Asp-72, and Asp-102 contribute to the GTP site. Asp-102 provides a ligand contact to Mg(2+).

This sequence belongs to the MobA family. As to quaternary structure, monomer. The cofactor is Mg(2+).

It localises to the cytoplasm. It carries out the reaction Mo-molybdopterin + GTP + H(+) = Mo-molybdopterin guanine dinucleotide + diphosphate. Its function is as follows. Transfers a GMP moiety from GTP to Mo-molybdopterin (Mo-MPT) cofactor (Moco or molybdenum cofactor) to form Mo-molybdopterin guanine dinucleotide (Mo-MGD) cofactor. The sequence is that of Molybdenum cofactor guanylyltransferase from Pseudomonas putida (strain ATCC 47054 / DSM 6125 / CFBP 8728 / NCIMB 11950 / KT2440).